A 290-amino-acid polypeptide reads, in one-letter code: Glycine--tRNA ligase alpha subunit (290 aa).

The protein belongs to the class-II aminoacyl-tRNA synthetase family. Tetramer of two alpha and two beta subunits.

The protein localises to the cytoplasm. It catalyses the reaction tRNA(Gly) + glycine + ATP = glycyl-tRNA(Gly) + AMP + diphosphate. This is Glycine--tRNA ligase alpha subunit from Brachyspira hyodysenteriae (strain ATCC 49526 / WA1).